We begin with the raw amino-acid sequence, 368 residues long: Proton-coupled zinc antiporter SLC30A8 (368 aa).

Residues 1-78 (MEFLERTYLV…AKWRLCAASA (78 aa)) are Cytoplasmic-facing. Positions 51, 52, and 53 each coordinate Zn(2+). Positions 51-53 (HCH) match the HCH Motif; seals regulatory zinc-binding pocket motif. A helical membrane pass occupies residues 79–99 (ICFFFMVAEVVGGHVAGSLAV). Over 100–102 (LTD) the chain is Lumenal, vesicle. Residues 103-123 (AAHLLIDLTSFLLSLFSLWLS) traverse the membrane as a helical segment. Positions 105 and 109 each coordinate Zn(2+). Residues 124–139 (SRPPSKRLTFGWYRAE) are Cytoplasmic-facing. The chain crosses the membrane as a helical span at residues 140 to 160 (ILGALLSVLCIWVVTGVLVYL). Residues 161–174 (ACERLLYPDYQIQA) lie on the Lumenal, vesicle side of the membrane. A helical transmembrane segment spans residues 175–195 (GIMITVSGCAVAANIVLTLIL). Residues 196 to 216 (HQRHLGHNHKDAQANASVRAA) are Cytoplasmic-facing. A helical transmembrane segment spans residues 217–237 (FVHALGDVFQSTSVLISALII). Zn(2+) is bound by residues His-219 and Asp-223. Over 238–245 (YFKPDYKM) the chain is Lumenal, vesicle. The helical transmembrane segment at 246–266 (ADPVCTFISSVLALASTVMIL) threads the bilayer. Residues 267–368 (KDFSILLMEG…SCLLCEDPQD (102 aa)) lie on the Cytoplasmic side of the membrane. Residues His-300, His-317, His-344, Glu-351, Cys-360, and Cys-363 each coordinate Zn(2+).

It belongs to the cation diffusion facilitator (CDF) transporter (TC 2.A.4) family. SLC30A subfamily. Homodimer. In terms of tissue distribution, expressed in endocrine pancreatic islet alpha and beta cells. May be more abundant in beta cells than in alpha cells. Expressed in cubical epithelium lining thyroid follicles (at protein level). In the adrenal gland, detected in the cortex, but not in the medulla (at protein level).

The protein localises to the cytoplasmic vesicle. It localises to the secretory vesicle membrane. The protein resides in the cell membrane. It carries out the reaction Zn(2+)(in) + 2 H(+)(out) = Zn(2+)(out) + 2 H(+)(in). Its function is as follows. Proton-coupled zinc ion antiporter mediating the entry of zinc into the lumen of pancreatic beta cell secretory granules, thereby regulating insulin secretion. The sequence is that of Proton-coupled zinc antiporter SLC30A8 from Rattus norvegicus (Rat).